Consider the following 545-residue polypeptide: Hsk1-interacting molecule 1 (545 aa).

Residues 492–541 (VDAKPGYCENCREKFDNFESHIRSSRHRRFAENNDNFKDLDELFALVQRP) form a DBF4-type zinc finger. Residues Cys499, Cys502, His512, and His518 each contribute to the Zn(2+) site.

As to quaternary structure, associates with hsk1. Interacts with mcm10. In terms of processing, hyperphosphorylated at the G1/S and S-phases of the cell cycle.

The protein localises to the nucleus. Activates hsk1 kinase and is essential for G1/S transition. Has a role in S-phase checkpoint control induced by replication fork blocks after nucleotide deprivation and DNA damage. This chain is Hsk1-interacting molecule 1 (him1), found in Schizosaccharomyces pombe (strain 972 / ATCC 24843) (Fission yeast).